The primary structure comprises 77 residues: Translation initiation factor IF-1, chloroplastic (77 aa).

In terms of domain architecture, S1-like spans 1–71 (MKRQKWIHEG…TRGRIIYRLR (71 aa)).

It belongs to the IF-1 family. In terms of assembly, component of the 30S ribosomal translation pre-initiation complex which assembles on the 30S ribosome in the order IF-2 and IF-3, IF-1 and N-formylmethionyl-tRNA(fMet); mRNA recruitment can occur at any time during PIC assembly.

The protein localises to the plastid. The protein resides in the chloroplast. One of the essential components for the initiation of protein synthesis. Stabilizes the binding of IF-2 and IF-3 on the 30S subunit to which N-formylmethionyl-tRNA(fMet) subsequently binds. Helps modulate mRNA selection, yielding the 30S pre-initiation complex (PIC). Upon addition of the 50S ribosomal subunit IF-1, IF-2 and IF-3 are released leaving the mature 70S translation initiation complex. The chain is Translation initiation factor IF-1, chloroplastic from Leucophyllum frutescens (Texas ranger).